A 507-amino-acid polypeptide reads, in one-letter code: Probable circularly permuted 1,3-beta-glucanase P23A10.11c YJL171C (507 aa).

An N-terminal signal peptide occupies residues 1-22 (MIAKSFIASFLFLCFAFSGVKA). The span at 228-264 (AAPPDSASESTPASTSYASSTTSATSTSTTSGSSGSS) shows a compositional bias: low complexity. A disordered region spans residues 228 to 266 (AAPPDSASESTPASTSYASSTTSATSTSTTSGSSGSSDW). An ExDxxE motif motif is present at residues 412-417 (EFDIFE). Residue Asn480 is glycosylated (N-linked (GlcNAc...) asparagine).

This sequence belongs to the PGA52 family.

Its subcellular location is the secreted. The enzyme catalyses Hydrolysis of (1-&gt;3)-beta-D-glucosidic linkages in (1-&gt;3)-beta-D-glucans.. Functionally, probable circularly permuted 1,3-beta-glucanase involved in cell wall modification through beta-1,3-glucan network alterations such as increased branching or remodeling. This Schizosaccharomyces pombe (strain 972 / ATCC 24843) (Fission yeast) protein is Probable circularly permuted 1,3-beta-glucanase P23A10.11c YJL171C.